A 217-amino-acid chain; its full sequence is MTGKITTLLFDLDGTLINTNELIIKTFQVTLQEFLPDRVFTREDILPFIGPSLMETFREINPAHADEMRAFYREYNLKHHDDLILEYDGVYEAIRALYEEDYKLGIVSTKMYDTIMRGLKVTGLDKFFQVVIGLDQVSNAKPDPEGIEMALSLLNATKEEAIMIGDNYHDIEAGKNAETLTAGVAWAIKGPEHLAQFQPDFMLEKMSDLLAIVRDEE.

The active-site Nucleophile is the Asp-11.

It belongs to the HAD-like hydrolase superfamily. PpaX family. Mg(2+) serves as cofactor.

It catalyses the reaction diphosphate + H2O = 2 phosphate + H(+). Hydrolyzes pyrophosphate formed during P-Ser-HPr dephosphorylation by HPrK/P. Might play a role in controlling the intracellular pyrophosphate pool. The protein is Pyrophosphatase PpaX of Listeria monocytogenes serotype 4a (strain HCC23).